We begin with the raw amino-acid sequence, 179 residues long: Protein GrpE (179 aa).

The segment at 1 to 20 (MSEETKEEIKNEKVDEEVTE) is disordered.

This sequence belongs to the GrpE family. In terms of assembly, homodimer.

Its subcellular location is the cytoplasm. Participates actively in the response to hyperosmotic and heat shock by preventing the aggregation of stress-denatured proteins, in association with DnaK and GrpE. It is the nucleotide exchange factor for DnaK and may function as a thermosensor. Unfolded proteins bind initially to DnaJ; upon interaction with the DnaJ-bound protein, DnaK hydrolyzes its bound ATP, resulting in the formation of a stable complex. GrpE releases ADP from DnaK; ATP binding to DnaK triggers the release of the substrate protein, thus completing the reaction cycle. Several rounds of ATP-dependent interactions between DnaJ, DnaK and GrpE are required for fully efficient folding. The protein is Protein GrpE of Lactococcus lactis subsp. cremoris (strain MG1363).